Here is a 179-residue protein sequence, read N- to C-terminus: MARLKEIYKKEIAPKLLKDLELKNPMEIPRITKITLNMGVGEALADKKVLENAVSDLEKIAGQKAVVTRARKSIAGFKVREGWPIGCKVTLRSDRMYEFLDRLISISIPRIRDFRGISPKQFDGRGNFSMGVSEQIIFPEIDYDKIDKLRGLDICISTTARNNDEGRALLKAFNFPFKG.

This sequence belongs to the universal ribosomal protein uL5 family. As to quaternary structure, part of the 50S ribosomal subunit; part of the 5S rRNA/L5/L18/L25 subcomplex. Contacts the 5S rRNA and the P site tRNA. Forms a bridge to the 30S subunit in the 70S ribosome.

In terms of biological role, this is one of the proteins that bind and probably mediate the attachment of the 5S RNA into the large ribosomal subunit, where it forms part of the central protuberance. In the 70S ribosome it contacts protein S13 of the 30S subunit (bridge B1b), connecting the 2 subunits; this bridge is implicated in subunit movement. Contacts the P site tRNA; the 5S rRNA and some of its associated proteins might help stabilize positioning of ribosome-bound tRNAs. The polypeptide is Large ribosomal subunit protein uL5 (Saccharophagus degradans (strain 2-40 / ATCC 43961 / DSM 17024)).